A 363-amino-acid polypeptide reads, in one-letter code: NAD(P)H-quinone oxidoreductase subunit 1, chloroplastic (363 aa).

A run of 6 helical transmembrane segments spans residues 30 to 50 (LVPI…IVWL), 104 to 124 (IAVI…HLVL), 127 to 147 (LGIG…GLLM), 253 to 273 (FGLF…FVTV), 300 to 320 (VFGT…FLFI), and 343 to 363 (FLLP…LLSL).

Belongs to the complex I subunit 1 family. NDH is composed of at least 16 different subunits, 5 of which are encoded in the nucleus.

The protein resides in the plastid. The protein localises to the chloroplast thylakoid membrane. The enzyme catalyses a plastoquinone + NADH + (n+1) H(+)(in) = a plastoquinol + NAD(+) + n H(+)(out). It carries out the reaction a plastoquinone + NADPH + (n+1) H(+)(in) = a plastoquinol + NADP(+) + n H(+)(out). Its function is as follows. NDH shuttles electrons from NAD(P)H:plastoquinone, via FMN and iron-sulfur (Fe-S) centers, to quinones in the photosynthetic chain and possibly in a chloroplast respiratory chain. The immediate electron acceptor for the enzyme in this species is believed to be plastoquinone. Couples the redox reaction to proton translocation, and thus conserves the redox energy in a proton gradient. This chain is NAD(P)H-quinone oxidoreductase subunit 1, chloroplastic, found in Piper cenocladum (Ant piper).